A 357-amino-acid chain; its full sequence is MFAKLEHLERQFEDLEQQLSSPEVFGDQERYRKLTKAHSDLKEIVEVFRVYRQLNEELAGNKEMLRDSDPEIQAMAREEIDAIEKRLPEMEHELKLLLLPKDPLDEKNVVLEIRAGTGGEEAALFAADLFRMYLRYAEDMGWRVEVLSSSETDSGGFKEIIGLISGDKVYSRMKFESGTHRVQRVPATETQGRIHTSAATVAVMPEADEVELDMKPEDLRFDVYRSSGPGGQSVNTTDSAVRVTHIPTGITVACQDEKSQHKNKAKGLKILASRLLQAQEDKRHEELAEQRRSLVGTGDRSGRIRTYNFPQGRITDHRINLTLYKLDAFMEGQIGDMLDALITHAQTEALKAQANVH.

Gln232 is modified (N5-methylglutamine).

Belongs to the prokaryotic/mitochondrial release factor family. Methylated by PrmC. Methylation increases the termination efficiency of RF1.

The protein localises to the cytoplasm. Peptide chain release factor 1 directs the termination of translation in response to the peptide chain termination codons UAG and UAA. This is Peptide chain release factor 1 from Oleidesulfovibrio alaskensis (strain ATCC BAA-1058 / DSM 17464 / G20) (Desulfovibrio alaskensis).